The following is a 78-amino-acid chain: LLLSTCVALLLQPPLGALGASLEPEYPGDNATPEQMAQYAAELRRYINMLTRPRYGKRDKEGTLDFLECGSPHSAVPR.

The signal sequence occupies residues 1–19 (LLLSTCVALLLQPPLGALG). The residue at position 55 (Y55) is a Tyrosine amide.

Belongs to the NPY family.

The protein localises to the secreted. Its function is as follows. Hormone secreted by pancreatic cells that acts as a regulator of pancreatic and gastrointestinal functions probably by signaling through the G protein-coupled receptor NPY4R2. The polypeptide is Pancreatic polypeptide prohormone (PPY) (Ovis aries (Sheep)).